The sequence spans 149 residues: uncharacterized protein (149 aa).

This is an uncharacterized protein from Acanthamoeba polyphaga (Amoeba).